A 489-amino-acid chain; its full sequence is N-succinylglutamate 5-semialdehyde dehydrogenase 1 (489 aa).

Residue 223–228 (GSSRTG) participates in NAD(+) binding. Residues Glu-246 and Cys-280 contribute to the active site.

Belongs to the aldehyde dehydrogenase family. AstD subfamily.

The catalysed reaction is N-succinyl-L-glutamate 5-semialdehyde + NAD(+) + H2O = N-succinyl-L-glutamate + NADH + 2 H(+). It functions in the pathway amino-acid degradation; L-arginine degradation via AST pathway; L-glutamate and succinate from L-arginine: step 4/5. Catalyzes the NAD-dependent reduction of succinylglutamate semialdehyde into succinylglutamate. The polypeptide is N-succinylglutamate 5-semialdehyde dehydrogenase 1 (Pseudoalteromonas translucida (strain TAC 125)).